Reading from the N-terminus, the 515-residue chain is SWI/SNF-related matrix-associated actin-dependent regulator of chromatin subfamily D member 1 (515 aa).

The disordered stretch occupies residues 1-128 (MAARAGFQSV…RNHNAKKKKM (128 aa)). A compositionally biased stretch (gly residues) spans 14–23 (GGAGASGGAG). Residues 43-167 (APGQGLYRSP…DQTIMRKRLD (125 aa)) form an interaction with ESR1, NR1H4, NR3C1, PGR and SMARCA4 region. Residues R68 and R88 each carry the asymmetric dimethylarginine modification. K101 participates in a covalent cross-link: Glycyl lysine isopeptide (Lys-Gly) (interchain with G-Cter in SUMO2). A compositionally biased stretch (low complexity) spans 103-117 (PAPQQIKQVQQQAVQ). An interaction with SMARCC1 and SMARCC2 region spans residues 168 to 474 (IQEALKRPIK…VMTDVVGNSE (307 aa)). The interval 180–515 (RKLRIFISNT…LEQALGIRNT (336 aa)) is necessary for GR/NR3C1-mediated remodeling and transcription from chromatin; required for GR/NR3C1 interaction with the BRG1/SMARCA4 complex in vivo. T203 carries the post-translational modification Phosphothreonine. An N6-acetyllysine modification is found at K223. The SWIB/MDM2 domain maps to 290–367 (YQPPQFKLDP…PQRLHALLMP (78 aa)). Residues 412–440 (ASQQEIATLDNKIHETIETINQLKTQREF) are a coiled coil.

It belongs to the SMARCD family. Component of the multiprotein chromatin-remodeling complexes SWI/SNF: SWI/SNF-A (BAF), SWI/SNF-B (PBAF) and related complexes. The canonical complex contains a catalytic subunit (either SMARCA4/BRG1/BAF190A or SMARCA2/BRM/BAF190B), and at least SMARCE1, ACTL6A/BAF53, SMARCC1/BAF155, SMARCC2/BAF170, and SMARCB1/SNF5/BAF47. Other subunits specific to each of the complexes may also be present permitting several possible combinations developmentally and tissue specific. Component of the BAF complex, which includes at least actin (ACTB), ARID1A/BAF250A, ARID1B/BAF250B, SMARCA2/BRM, SMARCA4/BRG1/BAF190A, ACTL6A/BAF53, ACTL6B/BAF53B, SMARCE1/BAF57, SMARCC1/BAF155, SMARCC2/BAF170, SMARCB1/SNF5/INI1, and one or more SMARCD1/BAF60A, SMARCD2/BAF60B, or SMARCD3/BAF60C. In muscle cells, the BAF complex also contains DPF3. Component of neural progenitors-specific chromatin remodeling complex (npBAF complex) composed of at least, ARID1A/BAF250A or ARID1B/BAF250B, SMARCD1/BAF60A, SMARCD3/BAF60C, SMARCA2/BRM/BAF190B, SMARCA4/BRG1/BAF190A, SMARCB1/BAF47, SMARCC1/BAF155, SMARCE1/BAF57, SMARCC2/BAF170, PHF10/BAF45A, ACTL6A/BAF53A and actin. Component of neuron-specific chromatin remodeling complex (nBAF complex) composed of at least, ARID1A/BAF250A or ARID1B/BAF250B, SMARCD1/BAF60A, SMARCD3/BAF60C, SMARCA2/BRM/BAF190B, SMARCA4/BRG1/BAF190A, SMARCB1/BAF47, SMARCC1/BAF155, SMARCE1/BAF57, SMARCC2/BAF170, DPF1/BAF45B, DPF3/BAF45C, ACTL6B/BAF53B and actin. Component of the SWI/SNF-B (PBAF) chromatin remodeling complex, at least composed of SMARCA4/BRG1, SMARCB1/BAF47/SNF5, ACTL6A/BAF53A or ACTL6B/BAF53B, SMARCE1/BAF57, SMARCD1/BAF60A, SMARCD2/BAF60B, perhaps SMARCD3/BAF60C, SMARCC1/BAF155, SMARCC2/BAF170, PBRM1/BAF180, ARID2/BAF200 and actin (ACTB). Component of SWI/SNF (GBAF) subcomplex, which includes at least BICRA or BICRAL (mutually exclusive), BRD9, SS18, SMARCA2/BRM, SMARCA4/BRG1/BAF190A, ACTL6A/BAF53, SMARCC1/BAF155, and SMARCD1/BAF60A. Specifically interacts with the VDR heterodimer complex. Interacts with ESR1, NR3C1, NR1H4, PGR, SMARCA4, SMARCC1 and SMARCC2. Interacts with DPF2. Interacts with FOS, FOSB, FOSL1 and FOSL2.

Its subcellular location is the nucleus. In terms of biological role, involved in transcriptional activation and repression of select genes by chromatin remodeling (alteration of DNA-nucleosome topology). Component of SWI/SNF chromatin remodeling complexes that carry out key enzymatic activities, changing chromatin structure by altering DNA-histone contacts within a nucleosome in an ATP-dependent manner. Belongs to the neural progenitors-specific chromatin remodeling complex (npBAF complex) and the neuron-specific chromatin remodeling complex (nBAF complex). During neural development a switch from a stem/progenitor to a postmitotic chromatin remodeling mechanism occurs as neurons exit the cell cycle and become committed to their adult state. The transition from proliferating neural stem/progenitor cells to postmitotic neurons requires a switch in subunit composition of the npBAF and nBAF complexes. As neural progenitors exit mitosis and differentiate into neurons, npBAF complexes which contain ACTL6A/BAF53A and PHF10/BAF45A, are exchanged for homologous alternative ACTL6B/BAF53B and DPF1/BAF45B or DPF3/BAF45C subunits in neuron-specific complexes (nBAF). The npBAF complex is essential for the self-renewal/proliferative capacity of the multipotent neural stem cells. The nBAF complex along with CREST plays a role regulating the activity of genes essential for dendrite growth. Has a strong influence on vitamin D-mediated transcriptional activity from an enhancer vitamin D receptor element (VDRE). May be a link between mammalian SWI-SNF-like chromatin remodeling complexes and the vitamin D receptor (VDR) heterodimer. Mediates critical interactions between nuclear receptors and the BRG1/SMARCA4 chromatin-remodeling complex for transactivation. Interacts with AKIRIN2. This chain is SWI/SNF-related matrix-associated actin-dependent regulator of chromatin subfamily D member 1 (SMARCD1), found in Bos taurus (Bovine).